We begin with the raw amino-acid sequence, 93 residues long: Phosphocarrier protein HPr (93 aa).

The HPr domain maps to 2–89 (AERRVNVGWA…KLVAEGLEEL (88 aa)). The active-site Pros-phosphohistidine intermediate is His-15.

Belongs to the HPr family.

It is found in the cytoplasm. In terms of biological role, general (non sugar-specific) component of the phosphoenolpyruvate-dependent sugar phosphotransferase system (sugar PTS). This major carbohydrate active-transport system catalyzes the phosphorylation of incoming sugar substrates concomitantly with their translocation across the cell membrane. The phosphoryl group from phosphoenolpyruvate (PEP) is transferred to the phosphoryl carrier protein HPr by enzyme I. Phospho-HPr then transfers it to the PTS EIIA domain. This Streptomyces coelicolor (strain ATCC BAA-471 / A3(2) / M145) protein is Phosphocarrier protein HPr (ptsH).